A 267-amino-acid chain; its full sequence is Glucosamine-6-phosphate deaminase (267 aa).

Asp-76 functions as the Proton acceptor; for enolization step in the catalytic mechanism. Catalysis depends on Asp-145, which acts as the For ring-opening step. Residue His-147 is the Proton acceptor; for ring-opening step of the active site. Glu-152 (for ring-opening step) is an active-site residue.

It belongs to the glucosamine/galactosamine-6-phosphate isomerase family. In terms of assembly, homohexamer.

The protein localises to the cytoplasm. The enzyme catalyses alpha-D-glucosamine 6-phosphate + H2O = beta-D-fructose 6-phosphate + NH4(+). It functions in the pathway nucleotide-sugar biosynthesis; UDP-N-acetyl-alpha-D-glucosamine biosynthesis; alpha-D-glucosamine 6-phosphate from D-fructose 6-phosphate: step 1/1. In terms of biological role, catalyzes the reversible conversion of alpha-D-glucosamine 6-phosphate (GlcN-6P) into beta-D-fructose 6-phosphate (Fru-6P) and ammonium ion, a regulatory reaction step in de novo uridine diphosphate-N-acetyl-alpha-D-glucosamine (UDP-GlcNAc) biosynthesis via hexosamine pathway. The chain is Glucosamine-6-phosphate deaminase from Dictyostelium discoideum (Social amoeba).